The primary structure comprises 608 residues: Centromere DNA-binding protein complex CBF3 subunit B (608 aa).

The segment at residues 14–42 (CSVCTRRKVKCDRMIPCGNCRKRGQDSEC) is a DNA-binding region (zn(2)-C6 fungal-type). The residue at position 575 (S575) is a Phosphoserine.

In terms of assembly, component of the CBF3 copmplex, which is formed of CBF3A/CBF2, CBF3B/CEP3, CBF3C/CTF13 and CBF3D.

The protein resides in the nucleus. It localises to the chromosome. The protein localises to the centromere. In terms of biological role, acts as a component of the centromere DNA-binding protein complex CBF3, which is essential for chromosome segregation and movement of centromeres along microtubules. CBF3 is required for the recruitment of other kinetochore complexes to CEN DNA. It plays a role in the attachment of chromosomes to the spindle and binds selectively to a highly conserved DNA sequence called CDEIII, found in centromers and in several promoters. The sequence is that of Centromere DNA-binding protein complex CBF3 subunit B (CEP3) from Saccharomyces cerevisiae (strain ATCC 204508 / S288c) (Baker's yeast).